The primary structure comprises 128 residues: MSSPEKVEPQRAILESFANPNPQRDYEIDMHCPEFTCLCPKTGQPDFADFRITYVADEKCIELKSLKIYMWSFRDRGAFHEAVTNQIMDDLIAVCDPRYMQVQGAFYVRGGITTTITVEHHKERSTEA.

Catalysis depends on cysteine 39, which acts as the Thioimide intermediate. Residue aspartate 46 is the Proton donor of the active site. Substrate is bound by residues 61-63 (IEL) and 80-81 (HE).

It belongs to the GTP cyclohydrolase I family. QueF type 1 subfamily.

The protein localises to the cytoplasm. The enzyme catalyses 7-aminomethyl-7-carbaguanine + 2 NADP(+) = 7-cyano-7-deazaguanine + 2 NADPH + 3 H(+). The protein operates within tRNA modification; tRNA-queuosine biosynthesis. Its function is as follows. Catalyzes the NADPH-dependent reduction of 7-cyano-7-deazaguanine (preQ0) to 7-aminomethyl-7-deazaguanine (preQ1). This is NADPH-dependent 7-cyano-7-deazaguanine reductase from Magnetococcus marinus (strain ATCC BAA-1437 / JCM 17883 / MC-1).